Here is a 197-residue protein sequence, read N- to C-terminus: Xanthine phosphoribosyltransferase (197 aa).

Residues L20 and N27 each coordinate xanthine. 128–132 provides a ligand contact to 5-phospho-alpha-D-ribose 1-diphosphate; sequence ANGQA. K156 is a xanthine binding site.

This sequence belongs to the purine/pyrimidine phosphoribosyltransferase family. Xpt subfamily. In terms of assembly, homodimer.

The protein resides in the cytoplasm. The enzyme catalyses XMP + diphosphate = xanthine + 5-phospho-alpha-D-ribose 1-diphosphate. It participates in purine metabolism; XMP biosynthesis via salvage pathway; XMP from xanthine: step 1/1. In terms of biological role, converts the preformed base xanthine, a product of nucleic acid breakdown, to xanthosine 5'-monophosphate (XMP), so it can be reused for RNA or DNA synthesis. The sequence is that of Xanthine phosphoribosyltransferase from Bacillus thuringiensis (strain Al Hakam).